The sequence spans 273 residues: Dermonecrotic toxin LspiSicTox-betaIE1i (273 aa).

Mg(2+) is bound by residues Glu25 and Asp27. The active-site Nucleophile is the His41. Cys45 and Cys51 are disulfide-bonded. Asp85 lines the Mg(2+) pocket.

The protein belongs to the arthropod phospholipase D family. Class I subfamily. Mg(2+) serves as cofactor. In terms of tissue distribution, expressed by the venom gland.

It localises to the secreted. The enzyme catalyses an N-(acyl)-sphingosylphosphocholine = an N-(acyl)-sphingosyl-1,3-cyclic phosphate + choline. The catalysed reaction is an N-(acyl)-sphingosylphosphoethanolamine = an N-(acyl)-sphingosyl-1,3-cyclic phosphate + ethanolamine. It catalyses the reaction a 1-acyl-sn-glycero-3-phosphocholine = a 1-acyl-sn-glycero-2,3-cyclic phosphate + choline. It carries out the reaction a 1-acyl-sn-glycero-3-phosphoethanolamine = a 1-acyl-sn-glycero-2,3-cyclic phosphate + ethanolamine. Dermonecrotic toxins cleave the phosphodiester linkage between the phosphate and headgroup of certain phospholipids (sphingolipid and lysolipid substrates), forming an alcohol (often choline) and a cyclic phosphate. This toxin acts on sphingomyelin (SM). It may also act on ceramide phosphoethanolamine (CPE), lysophosphatidylcholine (LPC) and lysophosphatidylethanolamine (LPE), but not on lysophosphatidylserine (LPS), and lysophosphatidylglycerol (LPG). It acts by transphosphatidylation, releasing exclusively cyclic phosphate products as second products. Induces dermonecrosis, hemolysis, increased vascular permeability, edema, inflammatory response, and platelet aggregation. The sequence is that of Dermonecrotic toxin LspiSicTox-betaIE1i from Loxosceles spinulosa (Recluse spider).